Reading from the N-terminus, the 168-residue chain is Disulfide bond formation protein B (168 aa).

Topologically, residues 1-13 are cytoplasmic; it reads MFLTYFDAMPRRV. A helical transmembrane segment spans residues 14-30; that stretch reads LALVSLACVALLAFGLY. Residues 31–48 lie on the Periplasmic side of the membrane; it reads LQHVVGLEPCPMCIVQRY. Cys40 and Cys43 are disulfide-bonded. The chain crosses the membrane as a helical span at residues 49-64; that stretch reads ALVLVAVVAGITAVAK. Topologically, residues 65-70 are cytoplasmic; sequence SRGLLI. A helical membrane pass occupies residues 71-88; it reads TGSGLLVLLSGFGAFVAA. The Periplasmic segment spans residues 89-144; it reads RQSFLQWYPPEVASCGRDFYGMIETFPLKRAIPMIFKGSGDCTKIDWTFLGLSIAN. Cysteines 103 and 130 form a disulfide. The chain crosses the membrane as a helical span at residues 145-163; sequence WSFLCFVAIALVGLVLITR. The Cytoplasmic segment spans residues 164–168; sequence LARQR.

Belongs to the DsbB family.

It localises to the cell inner membrane. Functionally, required for disulfide bond formation in some periplasmic proteins. Acts by oxidizing the DsbA protein. In Polaromonas sp. (strain JS666 / ATCC BAA-500), this protein is Disulfide bond formation protein B.